Consider the following 429-residue polypeptide: 3-phosphoshikimate 1-carboxyvinyltransferase (429 aa).

Positions 23, 24, and 28 each coordinate 3-phosphoshikimate. Lysine 23 is a phosphoenolpyruvate binding site. Residues glycine 95 and arginine 123 each coordinate phosphoenolpyruvate. Residues serine 168, glutamine 170, aspartate 316, and lysine 343 each coordinate 3-phosphoshikimate. Glutamine 170 serves as a coordination point for phosphoenolpyruvate. The active-site Proton acceptor is the aspartate 316. Positions 347 and 389 each coordinate phosphoenolpyruvate.

It belongs to the EPSP synthase family. In terms of assembly, monomer.

Its subcellular location is the cytoplasm. The catalysed reaction is 3-phosphoshikimate + phosphoenolpyruvate = 5-O-(1-carboxyvinyl)-3-phosphoshikimate + phosphate. It functions in the pathway metabolic intermediate biosynthesis; chorismate biosynthesis; chorismate from D-erythrose 4-phosphate and phosphoenolpyruvate: step 6/7. Catalyzes the transfer of the enolpyruvyl moiety of phosphoenolpyruvate (PEP) to the 5-hydroxyl of shikimate-3-phosphate (S3P) to produce enolpyruvyl shikimate-3-phosphate and inorganic phosphate. The chain is 3-phosphoshikimate 1-carboxyvinyltransferase from Bacillus thuringiensis (strain Al Hakam).